A 201-amino-acid chain; its full sequence is dITP/XTP pyrophosphatase (201 aa).

7-12 lines the substrate pocket; sequence TNNKGK. Mg(2+) contacts are provided by glutamate 40 and aspartate 69. Aspartate 69 serves as the catalytic Proton acceptor. Residues serine 70, 152-155, lysine 175, and 180-181 contribute to the substrate site; these read FGYD and HR.

This sequence belongs to the HAM1 NTPase family. Homodimer. Mg(2+) is required as a cofactor.

It catalyses the reaction XTP + H2O = XMP + diphosphate + H(+). It carries out the reaction dITP + H2O = dIMP + diphosphate + H(+). The catalysed reaction is ITP + H2O = IMP + diphosphate + H(+). Functionally, pyrophosphatase that catalyzes the hydrolysis of nucleoside triphosphates to their monophosphate derivatives, with a high preference for the non-canonical purine nucleotides XTP (xanthosine triphosphate), dITP (deoxyinosine triphosphate) and ITP. Seems to function as a house-cleaning enzyme that removes non-canonical purine nucleotides from the nucleotide pool, thus preventing their incorporation into DNA/RNA and avoiding chromosomal lesions. The sequence is that of dITP/XTP pyrophosphatase from Desulforamulus reducens (strain ATCC BAA-1160 / DSM 100696 / MI-1) (Desulfotomaculum reducens).